We begin with the raw amino-acid sequence, 172 residues long: MDLNNYIASIENYPQEGITFRDISPLMADGKAYSYAVREIVQYAADKDIDMIVGPEARGFIVGCPVAYALGIGFAPVRKPGKLPREVISADYEKEYGLDTLTMHADAIKPGQRVLIVDDLLATGGTVKATIEMIEKLGGVVAGCAFLVELDGLNGRKAIEGYDTKVLMNFPG.

This sequence belongs to the purine/pyrimidine phosphoribosyltransferase family. In terms of assembly, homodimer.

The protein resides in the cytoplasm. The catalysed reaction is AMP + diphosphate = 5-phospho-alpha-D-ribose 1-diphosphate + adenine. It functions in the pathway purine metabolism; AMP biosynthesis via salvage pathway; AMP from adenine: step 1/1. In terms of biological role, catalyzes a salvage reaction resulting in the formation of AMP, that is energically less costly than de novo synthesis. This chain is Adenine phosphoribosyltransferase, found in Streptococcus agalactiae serotype III (strain NEM316).